The primary structure comprises 1217 residues: ATP-dependent helicase/nuclease subunit A (1217 aa).

The 466-residue stretch at 10 to 475 folds into the UvrD-like helicase ATP-binding domain; that stretch reads VIWTDAQWQS…IDLSQNFRSR (466 aa). Residue 31 to 38 coordinates ATP; that stretch reads AAAGSGKT. A UvrD-like helicase C-terminal domain is found at 476-786; that stretch reads KEVLSTTNYI…RMMTIHSSKG (311 aa).

This sequence belongs to the helicase family. AddA subfamily. As to quaternary structure, heterodimer of AddA and AddB/RexB. Requires Mg(2+) as cofactor.

The enzyme catalyses Couples ATP hydrolysis with the unwinding of duplex DNA by translocating in the 3'-5' direction.. It carries out the reaction ATP + H2O = ADP + phosphate + H(+). Its function is as follows. The heterodimer acts as both an ATP-dependent DNA helicase and an ATP-dependent, dual-direction single-stranded exonuclease. Recognizes the chi site generating a DNA molecule suitable for the initiation of homologous recombination. The AddA nuclease domain is required for chi fragment generation; this subunit has the helicase and 3' -&gt; 5' nuclease activities. The protein is ATP-dependent helicase/nuclease subunit A of Staphylococcus aureus (strain Mu3 / ATCC 700698).